The sequence spans 574 residues: Glutamate--tRNA ligase (574 aa).

The short motif at 109–119 (PNPDFVIHMGN) is the 'HIGH' region element.

The protein belongs to the class-I aminoacyl-tRNA synthetase family. Glutamate--tRNA ligase type 2 subfamily.

It is found in the cytoplasm. The enzyme catalyses tRNA(Glu) + L-glutamate + ATP = L-glutamyl-tRNA(Glu) + AMP + diphosphate. Its function is as follows. Catalyzes the attachment of glutamate to tRNA(Glu) in a two-step reaction: glutamate is first activated by ATP to form Glu-AMP and then transferred to the acceptor end of tRNA(Glu). This Aeropyrum pernix (strain ATCC 700893 / DSM 11879 / JCM 9820 / NBRC 100138 / K1) protein is Glutamate--tRNA ligase.